A 241-amino-acid chain; its full sequence is 15,16-dihydrobiliverdin:ferredoxin oxidoreductase (241 aa).

The protein belongs to the HY2 family.

The enzyme catalyses 15,16-dihydrobiliverdin + oxidized 2[4Fe-4S]-[ferredoxin] = biliverdin IXalpha + reduced 2[4Fe-4S]-[ferredoxin] + 2 H(+). In terms of biological role, catalyzes the two-electron reduction of biliverdin IX-alpha at the C15 methine bridge. This is 15,16-dihydrobiliverdin:ferredoxin oxidoreductase (pebA) from Prochlorococcus marinus (strain SARG / CCMP1375 / SS120).